A 536-amino-acid chain; its full sequence is MSTLEPEKRRQHEDKSNEIIDSPIFLNKISALPESENVHCLLLKQLIGSPQLKQTWQFNFCVDLNFLLENMHASVFPTVDVRITHGYDSKSDSLARLTAQMNHCPVNVKLYSVYVPMWGTHHSKIMVNFFKDDSCQIVIHTANLVEPDWIGMSQAIFKTPLLYPKANDSLSTSSVPEYGNPSKIRKHEGSLDIKDDRNCDIIDVDSAFENFKHKSDTRSSDDLGVIGRQFQQDFLAYLKNYRHTYELIEKLKMYDFSAIRAIFIGSVPGKFEGEEESSWGLGKLKKILKMLEKDSKKDEKTKFEESDICISQCSSMGSFGPKQEYIAELTDGFGCQRGNWKFLFPTVKEVQQSMLGWQSGSSIHFNILGKTAASQVETLKKGKNLCKWVAMKAGRQRVAPHIKTYMRFSNDGELLRWVLVTSANLSKPAWGTLEGHKAKSRSTRGLRIRSYEAGVLLYPKLFEESQRAPCIMTPTYKTNTPNLDEKRREFYGKRVIGVRMCWDFPPVEYEDKDEIWSPVINRTDKDWLGYVWPPNW.

H122 serves as the catalytic Nucleophile. K124 lines the substrate pocket. Positions 315 to 318 are interaction with DNA; that stretch reads SMGS. The active-site Proton donor/acceptor is H401. Residue K403 participates in substrate binding.

This sequence belongs to the tyrosyl-DNA phosphodiesterase family.

It localises to the nucleus. Functionally, DNA repair enzyme that can remove a variety of covalent adducts from DNA through hydrolysis of a 3'-phosphodiester bond, giving rise to DNA with a free 3' phosphate. Catalyzes the hydrolysis of dead-end complexes between DNA and the topoisomerase I active site tyrosine residue. Hydrolyzes 3'-phosphoglycolates on protruding 3' ends on DNA double-strand breaks due to DNA damage by radiation and free radicals. Acts on blunt-ended double-strand DNA breaks and on single-stranded DNA. May have low 3'exonuclease activity and may be able to remove a single nucleoside from the 3'end of DNA and RNA molecules with 3'hydroxyl groups. Has no exonuclease activity towards DNA or RNA with a 3'phosphate. The protein is Probable tyrosyl-DNA phosphodiesterase of Schizosaccharomyces pombe (strain 972 / ATCC 24843) (Fission yeast).